The primary structure comprises 225 residues: UPF0700 transmembrane protein YoaK (225 aa).

6 helical membrane passes run 10 to 30 (LLSL…LSLG), 56 to 76 (VFNS…ATLM), 99 to 119 (ILFV…HILI), 137 to 157 (GIAG…LEDI), 174 to 194 (TVLR…VALA), and 197 to 217 (DFYH…MMTA).

It belongs to the UPF0700 family.

Its subcellular location is the cell membrane. This chain is UPF0700 transmembrane protein YoaK (yoaK), found in Bacillus subtilis (strain 168).